The following is a 338-amino-acid chain: CRISPR-associated endonuclease Cas1 (338 aa).

The Mn(2+) site is built by Glu165, His230, and Glu245.

The protein belongs to the CRISPR-associated endonuclease Cas1 family. As to quaternary structure, homodimer, forms a heterotetramer with a Cas2 homodimer. Mg(2+) is required as a cofactor. It depends on Mn(2+) as a cofactor.

Functionally, CRISPR (clustered regularly interspaced short palindromic repeat), is an adaptive immune system that provides protection against mobile genetic elements (viruses, transposable elements and conjugative plasmids). CRISPR clusters contain spacers, sequences complementary to antecedent mobile elements, and target invading nucleic acids. CRISPR clusters are transcribed and processed into CRISPR RNA (crRNA). Acts as a dsDNA endonuclease. Involved in the integration of spacer DNA into the CRISPR cassette. The polypeptide is CRISPR-associated endonuclease Cas1 (Fusobacterium nucleatum subsp. nucleatum (strain ATCC 25586 / DSM 15643 / BCRC 10681 / CIP 101130 / JCM 8532 / KCTC 2640 / LMG 13131 / VPI 4355)).